We begin with the raw amino-acid sequence, 221 residues long: Thiamine-phosphate synthase (221 aa).

4-amino-2-methyl-5-(diphosphooxymethyl)pyrimidine is bound by residues 46-50 (QFREK) and Asn-83. Mg(2+)-binding residues include Asp-84 and Asp-103. Ser-122 is a binding site for 4-amino-2-methyl-5-(diphosphooxymethyl)pyrimidine. 149–151 (TQS) serves as a coordination point for 2-[(2R,5Z)-2-carboxy-4-methylthiazol-5(2H)-ylidene]ethyl phosphate. Lys-152 provides a ligand contact to 4-amino-2-methyl-5-(diphosphooxymethyl)pyrimidine. 2-[(2R,5Z)-2-carboxy-4-methylthiazol-5(2H)-ylidene]ethyl phosphate contacts are provided by residues Gly-181 and 201–202 (IS).

It belongs to the thiamine-phosphate synthase family. Mg(2+) is required as a cofactor.

The catalysed reaction is 2-[(2R,5Z)-2-carboxy-4-methylthiazol-5(2H)-ylidene]ethyl phosphate + 4-amino-2-methyl-5-(diphosphooxymethyl)pyrimidine + 2 H(+) = thiamine phosphate + CO2 + diphosphate. The enzyme catalyses 2-(2-carboxy-4-methylthiazol-5-yl)ethyl phosphate + 4-amino-2-methyl-5-(diphosphooxymethyl)pyrimidine + 2 H(+) = thiamine phosphate + CO2 + diphosphate. It carries out the reaction 4-methyl-5-(2-phosphooxyethyl)-thiazole + 4-amino-2-methyl-5-(diphosphooxymethyl)pyrimidine + H(+) = thiamine phosphate + diphosphate. It participates in cofactor biosynthesis; thiamine diphosphate biosynthesis; thiamine phosphate from 4-amino-2-methyl-5-diphosphomethylpyrimidine and 4-methyl-5-(2-phosphoethyl)-thiazole: step 1/1. In terms of biological role, condenses 4-methyl-5-(beta-hydroxyethyl)thiazole monophosphate (THZ-P) and 2-methyl-4-amino-5-hydroxymethyl pyrimidine pyrophosphate (HMP-PP) to form thiamine monophosphate (TMP). This chain is Thiamine-phosphate synthase, found in Actinobacillus succinogenes (strain ATCC 55618 / DSM 22257 / CCUG 43843 / 130Z).